The following is a 730-amino-acid chain: S-adenosyl-L-methionine-dependent tRNA 4-demethylwyosine synthase TYW1 (730 aa).

The region spanning 79 to 237 (VKVFYGSQTG…DFQVWKGKFL (159 aa)) is the Flavodoxin-like domain. Residues 85-89 (SQTGT) and 176-208 (VFGL…ARIM) each bind FMN. The tract at residues 253 to 351 (GNCKKASCKN…RKSECEEERR (99 aa)) is disordered. Basic and acidic residues predominate over residues 267–282 (KEEAEDNHSLAEKNNS). The segment covering 283–297 (EEELMESSSDEESSS) has biased composition (acidic residues). The segment covering 333–351 (SQRVKQNGERKSECEEERR) has biased composition (basic and acidic residues). The 245-residue stretch at 398–642 (YGIESHRCME…ANLLPDYEIA (245 aa)) folds into the Radical SAM core domain. Cys414, Cys418, and Cys421 together coordinate [4Fe-4S] cluster.

It belongs to the TYW1 family. [4Fe-4S] cluster is required as a cofactor.

The enzyme catalyses N(1)-methylguanosine(37) in tRNA(Phe) + pyruvate + S-adenosyl-L-methionine = 4-demethylwyosine(37) in tRNA(Phe) + 5'-deoxyadenosine + L-methionine + CO2 + H2O. It participates in tRNA modification; wybutosine-tRNA(Phe) biosynthesis. Probable component of the wybutosine biosynthesis pathway. Wybutosine is a hyper modified guanosine with a tricyclic base found at the 3'-position adjacent to the anticodon of eukaryotic phenylalanine tRNA. Catalyzes the condensation of N-methylguanine with 2 carbon atoms from pyruvate to form the tricyclic 4-demethylwyosine, an intermediate in wybutosine biosynthesis. This chain is S-adenosyl-L-methionine-dependent tRNA 4-demethylwyosine synthase TYW1 (tyw1), found in Danio rerio (Zebrafish).